A 570-amino-acid polypeptide reads, in one-letter code: Probable electron transfer flavoprotein-ubiquinone oxidoreductase (570 aa).

FAD is bound at residue 13–27; sequence VVIVGAGPAGLSAAI. The [4Fe-4S] cluster site is built by cysteine 515, cysteine 539, cysteine 542, and cysteine 545. The 30-residue stretch at 530 to 559 folds into the 4Fe-4S ferredoxin-type domain; sequence KRFQINAANCVHCKTCDIKDPSQNITWVTP.

It depends on [4Fe-4S] cluster as a cofactor. The cofactor is FAD.

It carries out the reaction a ubiquinone + reduced [electron-transfer flavoprotein] = a ubiquinol + oxidized [electron-transfer flavoprotein] + H(+). Accepts electrons from ETF and reduces ubiquinone. This Acinetobacter baylyi (strain ATCC 33305 / BD413 / ADP1) protein is Probable electron transfer flavoprotein-ubiquinone oxidoreductase (etfD).